Here is a 148-residue protein sequence, read N- to C-terminus: uncharacterized protein (148 aa).

Residues 8–148 form the N-acetyltransferase domain; the sequence is QVMQEPELKI…DGFLTLILRN (141 aa).

This sequence belongs to the acetyltransferase family.

This is an uncharacterized protein from Bacillus subtilis (strain 168).